The sequence spans 394 residues: Elongation factor Tu-A (394 aa).

Positions 10-204 (KPHVNVGTIG…ALDTYIPEPE (195 aa)) constitute a tr-type G domain. The interval 19–26 (GHVDHGKT) is G1. 19–26 (GHVDHGKT) is a GTP binding site. Mg(2+) is bound at residue threonine 26. The tract at residues 60–64 (GITIN) is G2. A G3 region spans residues 81–84 (DCPG). GTP-binding positions include 81-85 (DCPGH) and 136-139 (NKCD). Positions 136-139 (NKCD) are G4. The segment at 174 to 176 (SAL) is G5.

This sequence belongs to the TRAFAC class translation factor GTPase superfamily. Classic translation factor GTPase family. EF-Tu/EF-1A subfamily. Monomer.

It localises to the cytoplasm. The catalysed reaction is GTP + H2O = GDP + phosphate + H(+). In terms of biological role, GTP hydrolase that promotes the GTP-dependent binding of aminoacyl-tRNA to the A-site of ribosomes during protein biosynthesis. The polypeptide is Elongation factor Tu-A (Vibrio cholerae serotype O1 (strain ATCC 39315 / El Tor Inaba N16961)).